A 345-amino-acid polypeptide reads, in one-letter code: KRR1 small subunit processome component homolog (345 aa).

Positions 125–193 constitute a KH domain; the sequence is DIIKIGNLVH…VRDIVLETMN (69 aa). Positions 232–245 are enriched in basic residues; it reads NISKRKQPKVKKQK. Disordered stretches follow at residues 232–260 and 273–329; these read NISK…ESKV and QEQK…VDVK. A coiled-coil region spans residues 270–298; that stretch reads FLNQEQKQAKRNQERTEKQKEAAKRQDER. 2 stretches are compositionally biased toward basic and acidic residues: residues 276-302 and 315-329; these read KQAK…RNKD and LKKE…VDVK.

This sequence belongs to the KRR1 family. In terms of assembly, monomer. Component of the ribosomal small subunit (SSU) processome.

Its subcellular location is the nucleus. The protein localises to the nucleolus. Its function is as follows. Required for 40S ribosome biogenesis. Involved in nucleolar processing of pre-18S ribosomal RNA and ribosome assembly. Binds to RNA. Required for female germline development, cell viability during eye development and for survival of dividing cells and epithelial cells during early wing disk development. This Drosophila erecta (Fruit fly) protein is KRR1 small subunit processome component homolog.